The sequence spans 234 residues: Transcriptional regulatory protein WalR (234 aa).

Residues 3–116 (KILIVDDEKP…ELQARVKALL (114 aa)) enclose the Response regulatory domain. At aspartate 52 the chain carries 4-aspartylphosphate. Positions 133-232 (PQPIQIGDLE…RRGVGYYMRN (100 aa)) form a DNA-binding region, ompR/PhoB-type.

Monomer. Homodimer. In terms of processing, phosphorylated by WalK; can also be dephosphorylated by WalK.

Its subcellular location is the cytoplasm. Member of the two-component regulatory system WalK/WalR that regulates genes involved in cell wall metabolism. Binds to the promoter region of the transcription factor fabT gene in the fabTH-acp operon in vitro. Inhibits transcription of fabT, probably acting in an unphosphorylated form, thereby playing a role in the regulation of fatty acid biosynthesis. Essential for normal growth in vitro. Required for maintaining normal cellular morphology, acting, at least in part, by regulating peptidoglycan hydrolase pcsB. Involved in maintaining expression of WalRK regulon genes in exponentially growing cells. The protein is Transcriptional regulatory protein WalR of Streptococcus pneumoniae serotype 2 (strain D39 / NCTC 7466).